The following is a 158-amino-acid chain: Transcription elongation factor GreA (158 aa).

The stretch at 47–68 forms a coiled coil; the sequence is AEYDAAKEAQGLLEMRIAKLEE.

It belongs to the GreA/GreB family.

Functionally, necessary for efficient RNA polymerase transcription elongation past template-encoded arresting sites. The arresting sites in DNA have the property of trapping a certain fraction of elongating RNA polymerases that pass through, resulting in locked ternary complexes. Cleavage of the nascent transcript by cleavage factors such as GreA or GreB allows the resumption of elongation from the new 3'terminus. GreA releases sequences of 2 to 3 nucleotides. The polypeptide is Transcription elongation factor GreA (Flavobacterium johnsoniae (strain ATCC 17061 / DSM 2064 / JCM 8514 / BCRC 14874 / CCUG 350202 / NBRC 14942 / NCIMB 11054 / UW101) (Cytophaga johnsonae)).